The primary structure comprises 951 residues: Bromodomain-containing protein 8 (951 aa).

Lysine 85 is subject to N6-acetyllysine. A coiled-coil region spans residues 97 to 171; sequence VRKLTAERVE…ATDAAYQARQ (75 aa). The segment at 161–273 is disordered; sequence KATDAAYQAR…TPPPSPLLSE (113 aa). The span at 204–226 shows a compositional bias: polar residues; sequence TPTTMEEATSGVTPGTLPSTPVT. 2 positions are modified to phosphoserine: serine 456 and serine 460. The disordered stretch occupies residues 520 to 547; that stretch reads EENDDPQSLPGPWEHPIQQERDKPVPLP. Residue lysine 542 forms a Glycyl lysine isopeptide (Lys-Gly) (interchain with G-Cter in SUMO2) linkage. The residue at position 554 (lysine 554) is an N6-acetyllysine; alternate. A Glycyl lysine isopeptide (Lys-Gly) (interchain with G-Cter in SUMO1); alternate cross-link involves residue lysine 554. A Glycyl lysine isopeptide (Lys-Gly) (interchain with G-Cter in SUMO2); alternate cross-link involves residue lysine 554. Lysine 582 participates in a covalent cross-link: Glycyl lysine isopeptide (Lys-Gly) (interchain with G-Cter in SUMO2). Residues 584–745 are disordered; it reads EPTEPEPGMS…PVSESDDGFS (162 aa). Over residues 610-622 the composition is skewed to basic and acidic residues; it reads PELRSQDSDEEPR. A Glycyl lysine isopeptide (Lys-Gly) (interchain with G-Cter in SUMO2) cross-link involves residue lysine 648. Serine 652 is modified (phosphoserine). Residues 673–688 are compositionally biased toward basic and acidic residues; it reads ETQHKFEMSDSLKEES. Lysine 685 is covalently cross-linked (Glycyl lysine isopeptide (Lys-Gly) (interchain with G-Cter in SUMO2)). Phosphoserine is present on residues serine 694, serine 710, and serine 714. The Bromo domain occupies 779–884; sequence IQAQKIWKKA…RDVLEQIQQF (106 aa). Positions 900-922 are disordered; it reads AKSLRGRDSTRKQDASEKDSVPM. Basic and acidic residues predominate over residues 904 to 919; the sequence is RGRDSTRKQDASEKDS.

As to quaternary structure, component of the NuA4 histone acetyltransferase complex which contains the catalytic subunit KAT5/TIP60 and the subunits EP400, TRRAP/PAF400, BRD8/SMAP, EPC1, DMAP1/DNMAP1, RUVBL1/TIP49, RUVBL2, ING3, actin, ACTL6A/BAF53A, MORF4L1/MRG15, MORF4L2/MRGX, MRGBP, YEATS4/GAS41, VPS72/YL1 and MEAF6. Component of a NuA4-related complex which contains EP400, TRRAP/PAF400, SRCAP, BRD8/SMAP, EPC1, DMAP1/DNMAP1, RUVBL1/TIP49, RUVBL2, actin, ACTL6A/BAF53A, VPS72 and YEATS4/GAS41. BRD8 isoform 2 interacts with RXRA/NR2B1 and THRB/ERBA2. Component of a SWR1-like complex.

The protein localises to the nucleus. In terms of biological role, may act as a coactivator during transcriptional activation by hormone-activated nuclear receptors (NR). Stimulates transcriptional activation by AR/DHTR, ESR1/NR3A1, RXRA/NR2B1 and THRB/ERBA2. Component of the NuA4 histone acetyltransferase (HAT) complex which is involved in transcriptional activation of select genes principally by acetylation of nucleosomal histones H4 and H2A. This modification may both alter nucleosome - DNA interactions and promote interaction of the modified histones with other proteins which positively regulate transcription. This complex may be required for the activation of transcriptional programs associated with oncogene and proto-oncogene mediated growth induction, tumor suppressor mediated growth arrest and replicative senescence, apoptosis, and DNA repair. NuA4 may also play a direct role in DNA repair when recruited to sites of DNA damage. Component of a SWR1-like complex that specifically mediates the removal of histone H2A.Z/H2AZ1 from the nucleosome. This chain is Bromodomain-containing protein 8 (Brd8), found in Mus musculus (Mouse).